We begin with the raw amino-acid sequence, 843 residues long: OTU domain-containing protein 7B (843 aa).

The segment at 50–88 (GNLPPSFSEGSGGSRTPEKGFSDREPTRPPRPILQRQDD) is disordered. The span at 65–77 (TPEKGFSDREPTR) shows a compositional bias: basic and acidic residues. At serine 100 the chain carries Phosphoserine. The tract at residues 152–401 (ERDLIEQSML…AVDPGKGWEW (250 aa)) is TRAF-binding. Residues 167 to 440 (AGRLNWWVSV…VKWIPLSSDA (274 aa)) form a catalytic region. The OTU domain occupies 183–365 (LLPLATTGDG…QAHFSALVSM (183 aa)). A regulatory loop region spans residues 187–193 (ATTGDGN). Residue aspartate 191 is part of the active site. The active-site Nucleophile is cysteine 194. The active-site Proton acceptor is histidine 358. Disordered stretches follow at residues 442–587 (APLA…GGSK) and 652–711 (IMNG…CQEP). Basic and acidic residues-rich tracts occupy residues 456 to 471 (DEPR…DKES) and 488 to 500 (SKRD…KRAD). Phosphoserine is present on residues serine 464, serine 467, and serine 471. Positions 483-498 (RRKEKSKRDREKDKKR) match the Nuclear localization signal motif. A compositionally biased stretch (gly residues) spans 531-543 (KPGGVGTGLGGSS). Basic and acidic residues predominate over residues 665-675 (KKPEPDAREEQ). Threonine 729 is subject to Phosphothreonine. Residues 732 to 792 (RQCPPGRPYP…PEPDGWAGGL (61 aa)) form a disordered region. The segment at 796-831 (PPTQTKCKQPNCSFYGHPETNNFCSCCYREELRRRE) adopts an A20-type zinc-finger fold. Positions 802, 807, 819, and 822 each coordinate Zn(2+).

The protein belongs to the peptidase C64 family. As to quaternary structure, interacts with ZAP70 in activated T cells, but not in resting T cells. Interacts with TRAF3. Interacts with TRAF6. Interacts with PARK7, leading to inhibit deubiquitinase activity. Interacts with EGFR, ITCH and NEDD4. Phosphorylated by EGFR. As to expression, widely expressed. Abundant in kidney, heart and fetal liver. Expressed differentially among B-cells at distinct developmental stages. Higher expression seen in primary immature B-cells as compared to the mature cells.

The protein resides in the cytoplasm. The protein localises to the nucleus. The catalysed reaction is Thiol-dependent hydrolysis of ester, thioester, amide, peptide and isopeptide bonds formed by the C-terminal Gly of ubiquitin (a 76-residue protein attached to proteins as an intracellular targeting signal).. With respect to regulation, deubiquitinase activity is inhibited following interaction with PARK7. Negative regulator of the non-canonical NF-kappa-B pathway that acts by mediating deubiquitination of TRAF3, an inhibitor of the NF-kappa-B pathway, thereby acting as a negative regulator of B-cell responses. In response to non-canonical NF-kappa-B stimuli, deubiquitinates 'Lys-48'-linked polyubiquitin chains of TRAF3, preventing TRAF3 proteolysis and over-activation of non-canonical NF-kappa-B. Negatively regulates mucosal immunity against infections. Deubiquitinates ZAP70, and thereby regulates T cell receptor (TCR) signaling that leads to the activation of NF-kappa-B. Plays a role in T cell homeostasis and is required for normal T cell responses, including production of IFNG and IL2. Mediates deubiquitination of EGFR. Has deubiquitinating activity toward 'Lys-11', 'Lys-48' and 'Lys-63'-linked polyubiquitin chains. Has a much higher catalytic rate with 'Lys-11'-linked polyubiquitin chains (in vitro); however the physiological significance of these data are unsure. Hydrolyzes both linear and branched forms of polyubiquitin. Acts as a regulator of mTORC1 and mTORC2 assembly by mediating 'Lys-63'-linked deubiquitination of MLST8, thereby promoting assembly of the mTORC2 complex, while inibiting formation of the mTORC1 complex. This chain is OTU domain-containing protein 7B (OTUD7B), found in Homo sapiens (Human).